The chain runs to 135 residues: Transcriptional regulator HosA (135 aa).

The region spanning 4-134 (RNKAFHQLRQ…FMQLVRKMMN (131 aa)) is the HTH marR-type domain. A DNA-binding region (H-T-H motif) is located at residues 48-71 (QVALIEAAVSTKATLAEMLARMEN).

In terms of biological role, involved in the temperature-dependent positive control of flagellum-driven swimming motility and cellular aggregation. Regulates fliC expression by directly interacting with fliC promoter. In Escherichia coli O111:H-, this protein is Transcriptional regulator HosA (hosA).